Here is a 741-residue protein sequence, read N- to C-terminus: NAD(P)H-quinone oxidoreductase subunit 5, chloroplastic (741 aa).

The next 16 membrane-spanning stretches (helical) occupy residues 9 to 29 (WIIPFLPLPVPMLIGLGLLLF), 40 to 60 (WAFQSVLLLSIVMIFSINLSI), 89 to 109 (IDPLTSIMSILITTVGILVLI), 125 to 145 (FAYMSFFSTSMLGLVTSSNLI), 147 to 167 (IYIFWELVGMCSYLLIGFWFT), 185 to 205 (GDFGLLLGILGFYWITGSFEF), 219 to 239 (NEVNFFFVTLCAVLLFGGAIA), 258 to 278 (TPISALIRAATMVAAGIFLVA), 283 to 303 (LFIVIPHIMNFISLIGIITVF), 327 to 347 (LGYMMLALGMGSYRSALFHLI), 354 to 374 (ALLFLGSGSVIHSMETLVGYC), 396 to 416 (NSFLLGTLSLCGIPPLACFWS), 425 to 445 (WLYSPIFATIAWSTAGLTAFY), 549 to 569 (LFPILILIIFTLFVGFLGIHF), 605 to 625 (VFSVSIASFGIFIAFFLYKPV), and 721 to 741 (YLFFYFSYVSIFLLIYYFVNL).

Belongs to the complex I subunit 5 family. NDH is composed of at least 16 different subunits, 5 of which are encoded in the nucleus.

Its subcellular location is the plastid. The protein localises to the chloroplast thylakoid membrane. It carries out the reaction a plastoquinone + NADH + (n+1) H(+)(in) = a plastoquinol + NAD(+) + n H(+)(out). It catalyses the reaction a plastoquinone + NADPH + (n+1) H(+)(in) = a plastoquinol + NADP(+) + n H(+)(out). Its function is as follows. NDH shuttles electrons from NAD(P)H:plastoquinone, via FMN and iron-sulfur (Fe-S) centers, to quinones in the photosynthetic chain and possibly in a chloroplast respiratory chain. The immediate electron acceptor for the enzyme in this species is believed to be plastoquinone. Couples the redox reaction to proton translocation, and thus conserves the redox energy in a proton gradient. The chain is NAD(P)H-quinone oxidoreductase subunit 5, chloroplastic (ndhF) from Pentatrichia integra (Rock-climbing daisy).